The chain runs to 334 residues: Probable prephenate dehydratase (334 aa).

Residues 7 to 224 (RVLFLGPKGT…NTTRFLVLKR (218 aa)) form the Prephenate dehydratase domain. The region spanning 244-322 (LTFTTRQDDP…SDKSKQWCLW (79 aa)) is the ACT domain.

It localises to the cytoplasm. The enzyme catalyses prephenate + H(+) = 3-phenylpyruvate + CO2 + H2O. It participates in amino-acid biosynthesis; L-phenylalanine biosynthesis; phenylpyruvate from prephenate: step 1/1. In terms of biological role, catayzes the decarboxylation/dehydration of prephenate to phenylpyruvate. The chain is Probable prephenate dehydratase (PHA2) from Saccharomyces cerevisiae (strain ATCC 204508 / S288c) (Baker's yeast).